A 176-amino-acid chain; its full sequence is Co-chaperone protein HscB homolog (176 aa).

One can recognise a J domain in the interval 7 to 79; it reads THFSLFGLPE…LKRATYLLHL (73 aa).

The protein belongs to the HscB family. In terms of assembly, interacts with HscA and stimulates its ATPase activity.

Its function is as follows. Co-chaperone involved in the maturation of iron-sulfur cluster-containing proteins. Seems to help targeting proteins to be folded toward HscA. The chain is Co-chaperone protein HscB homolog from Ralstonia nicotianae (strain ATCC BAA-1114 / GMI1000) (Ralstonia solanacearum).